The primary structure comprises 299 residues: Protoheme IX farnesyltransferase (299 aa).

The next 9 helical transmembrane spans lie at 17–37 (VVAL…PAPY), 41–61 (GLLV…AAVF), 91–111 (ALMW…LFVN), 113–133 (ITMV…TLYL), 141–161 (IVIG…AVSG), 168–188 (ACLL…ALAI), 207–227 (GLAY…LVSL), 228–248 (LPYL…ALGI), and 266–286 (IAWC…VTLL).

It belongs to the UbiA prenyltransferase family. Protoheme IX farnesyltransferase subfamily.

It localises to the cell inner membrane. It carries out the reaction heme b + (2E,6E)-farnesyl diphosphate + H2O = Fe(II)-heme o + diphosphate. It participates in porphyrin-containing compound metabolism; heme O biosynthesis; heme O from protoheme: step 1/1. Its function is as follows. Converts heme B (protoheme IX) to heme O by substitution of the vinyl group on carbon 2 of heme B porphyrin ring with a hydroxyethyl farnesyl side group. The polypeptide is Protoheme IX farnesyltransferase (Ruthia magnifica subsp. Calyptogena magnifica).